The following is a 198-amino-acid chain: MARCKS-related protein (198 aa).

The segment at 1–198 (MGSQSSKAPR…DPAPASEQNE (198 aa)) is disordered. Gly2 is lipidated: N-myristoyl glycine. Thr14 is modified (phosphothreonine). 4 positions are modified to phosphoserine: Ser22, Ser36, Ser41, and Ser48. Residues 53-62 (GTEEAAGATG) are compositionally biased toward low complexity. At Ser71 the chain carries Phosphoserine. The span at 76-85 (AKGEVPPKET) shows a compositional bias: basic and acidic residues. Thr85 carries the phosphothreonine modification. A compositionally biased stretch (basic residues) spans 86 to 98 (PKKKKKFSFKKPF). An effector domain involved in lipid-binding and calmodulin-binding region spans residues 87–110 (KKKKKFSFKKPFKLSGLSFKRNRK). Residues Ser93, Ser101, and Ser104 each carry the phosphoserine; by PKC modification. Ser119 is subject to Phosphoserine. Phosphoserine; by MAPK8 is present on Ser120. Residue Ser132 is modified to Phosphoserine. Position 148 is a phosphothreonine; by MAPK8 (Thr148). A phosphoserine mark is found at Ser151 and Ser162. Low complexity predominate over residues 156 to 167 (AKGAEASAAAKG). Residue Thr170 is modified to Phosphothreonine. Residue Thr182 is modified to Phosphothreonine; by MAPK8.

It belongs to the MARCKS family. Binds to filamentous actin (F-actin), but not to monomeric G-actin, independently of its phosphorylation status. Interacts with calmodulin. In terms of processing, phosphorylated. Phosphorylation at Ser-120 and Thr-182 is non-redundantly catalyzed by MAPK8 in vivo. Phosphorylation at Thr-148 is preferentially catalyzed by MAPK8 in vivo, but this modification can also be catalyzed by other kinases in the absence of MAPK8. May be phosphorylated by protein kinase C, which disrupts the interaction with calmodulin.

It is found in the cytoplasm. Its subcellular location is the cytoskeleton. The protein resides in the cell membrane. Functionally, controls cell movement by regulating actin cytoskeleton homeostasis and filopodium and lamellipodium formation. When unphosphorylated, induces cell migration. When phosphorylated by MAPK8, induces actin bundles formation and stabilization, thereby reducing actin plasticity, hence restricting cell movement, including neuronal migration. May be involved in coupling the protein kinase C and calmodulin signal transduction systems. The chain is MARCKS-related protein (MARCKSL1) from Bos taurus (Bovine).